Here is a 408-residue protein sequence, read N- to C-terminus: Putative transporter AmpG 2 (408 aa).

12 helical membrane-spanning segments follow: residues 11–31 (IFNI…YLLT), 49–69 (IGLF…GPLL), 84–104 (YCLV…TSFN), 110–130 (TPFV…DMLI), 154–174 (FRIG…IISW), 177–197 (VYRT…FYPL), 224–244 (WIVI…LSIM), 261–281 (IGYK…GGFL), 294–311 (VLIY…LYFL), 315–337 (IISL…SPFF), 353–373 (IALI…ISGY), and 382–402 (YFFI…LYLP).

Belongs to the major facilitator superfamily.

The protein localises to the cell inner membrane. The protein is Putative transporter AmpG 2 (ampG2) of Rickettsia typhi (strain ATCC VR-144 / Wilmington).